The following is a 678-amino-acid chain: Protein CASP (678 aa).

The Cytoplasmic portion of the chain corresponds to 1–619 (MAANVGSMFQ…LVLSNKMART (619 aa)). Coiled-coil stretches lie at residues 67 to 450 (LLKS…QDLS) and 502 to 556 (LSII…FLQS). The residue at position 586 (S586) is a Phosphoserine. Residues 620–640 (IGFFYTLFLHCLVFLVLYKLA) traverse the membrane as a helical; Anchor for type IV membrane protein segment. Topologically, residues 641–678 (WSESMERDCATFCAKKFADHLHKFHENDNGAAAGDLWQ) are lumenal.

This sequence belongs to the CASP family. Homodimer; disulfide-linked. Interacts with GOLGA5.

It localises to the golgi apparatus membrane. Its function is as follows. May be involved in intra-Golgi retrograde transport. This Pongo abelii (Sumatran orangutan) protein is Protein CASP (CUTL1).